Here is a 733-residue protein sequence, read N- to C-terminus: Zinc finger protein indra (733 aa).

In terms of domain architecture, ZAD spans 17–91 (VRCDHCGTSQ…RETVDRVQEQ (75 aa)). 4 residues coordinate Zn(2+): Cys19, Cys22, Cys64, and Cys67. A compositionally biased stretch (basic and acidic residues) spans 90 to 100 (EQPAKKTKVAE). The tract at residues 90–121 (EQPAKKTKVAEIEEPSTQESDKKAVKVPKKNT) is disordered. Ser109, Ser153, and Ser176 each carry phosphoserine. Thr180 and Thr188 each carry phosphothreonine. 2 consecutive C2H2-type zinc fingers follow at residues 228–251 (FQCP…QKEH) and 259–282 (YPCT…RDTH). A compositionally biased stretch (basic and acidic residues) spans 285–316 (TFESEAKTKAKESKEKEAKSGAKNKIDAKAKE). Residues 285–336 (TFESEAKTKAKESKEKEAKSGAKNKIDAKAKETNAVSQRKKPKEKKSKEKKT) are disordered. C2H2-type zinc fingers lie at residues 416-439 (FQCE…KTVH) and 447-469 (FKCH…MTLH). Disordered regions lie at residues 499 to 525 (IENT…FTNR) and 540 to 622 (AFKT…SSDV). The span at 592-602 (SVSTTNGNSPA) shows a compositional bias: polar residues. A phosphoserine mark is found at Ser600, Ser642, and Ser646. Thr647 is modified (phosphothreonine). 2 consecutive C2H2-type zinc fingers follow at residues 653 to 676 (LSCD…EKKH) and 708 to 733 (LPCG…RKRH). Position 654 is a phosphoserine (Ser654).

Belongs to the krueppel C2H2-type zinc-finger protein family.

The protein resides in the nucleus. It localises to the nucleolus. Its function is as follows. Required for rDNA copy number maintenance and non-random sister chromatid segregation (NRSS) following unequal sister chromatid exchange. Binds ribosomal DNA (rDNA) preferentially binding to intergenic spacers (IGS) regions on both X and Y chromosomes. Essential for NRSS, a mechanism which contributes to the recovery and maintenance of inherently unstable rDNA copy numbers so that the integrity of the germline genome is upheld over generations and germline immortality is sustained. May be involved in transcriptional regulation. The sequence is that of Zinc finger protein indra from Drosophila melanogaster (Fruit fly).